Here is a 63-residue protein sequence, read N- to C-terminus: Large ribosomal subunit protein uL29 (63 aa).

It belongs to the universal ribosomal protein uL29 family.

In Vibrio vulnificus (strain CMCP6), this protein is Large ribosomal subunit protein uL29.